We begin with the raw amino-acid sequence, 193 residues long: dTTP/UTP pyrophosphatase (193 aa).

The active-site Proton acceptor is the aspartate 71.

The protein belongs to the Maf family. YhdE subfamily. It depends on a divalent metal cation as a cofactor.

It localises to the cytoplasm. The enzyme catalyses dTTP + H2O = dTMP + diphosphate + H(+). It carries out the reaction UTP + H2O = UMP + diphosphate + H(+). Nucleoside triphosphate pyrophosphatase that hydrolyzes dTTP and UTP. May have a dual role in cell division arrest and in preventing the incorporation of modified nucleotides into cellular nucleic acids. In Dictyoglomus thermophilum (strain ATCC 35947 / DSM 3960 / H-6-12), this protein is dTTP/UTP pyrophosphatase.